The sequence spans 305 residues: Protoheme IX farnesyltransferase (305 aa).

Helical transmembrane passes span 29-49 (VTQLAVFCAIIGMFLATPGMV), 51-71 (WSVLIGGAAGIWLLAGAAFAI), 101-121 (TLIFSAVLGGAGMWLLHVFAN), 123-143 (LTMWLTFATFLGYAVVYTILL), 151-171 (IVIGGLSGAMPPALGWSAVSG), 177-197 (AWFLVLIIFTWTPPHFWALAL), 221-241 (LLHILLYTLIMIAATLLPFVY), 244-264 (SGYIYLVAALGLGLVFLGYAW), and 283-303 (ILYLSLLFAVLLVDHYFKFVP).

The protein belongs to the UbiA prenyltransferase family. Protoheme IX farnesyltransferase subfamily.

It localises to the cell inner membrane. It carries out the reaction heme b + (2E,6E)-farnesyl diphosphate + H2O = Fe(II)-heme o + diphosphate. It participates in porphyrin-containing compound metabolism; heme O biosynthesis; heme O from protoheme: step 1/1. Functionally, converts heme B (protoheme IX) to heme O by substitution of the vinyl group on carbon 2 of heme B porphyrin ring with a hydroxyethyl farnesyl side group. In Cupriavidus metallidurans (strain ATCC 43123 / DSM 2839 / NBRC 102507 / CH34) (Ralstonia metallidurans), this protein is Protoheme IX farnesyltransferase.